The sequence spans 309 residues: Methionyl-tRNA formyltransferase (309 aa).

110-113 (SLLP) lines the (6S)-5,6,7,8-tetrahydrofolate pocket.

Belongs to the Fmt family.

It catalyses the reaction L-methionyl-tRNA(fMet) + (6R)-10-formyltetrahydrofolate = N-formyl-L-methionyl-tRNA(fMet) + (6S)-5,6,7,8-tetrahydrofolate + H(+). In terms of biological role, attaches a formyl group to the free amino group of methionyl-tRNA(fMet). The formyl group appears to play a dual role in the initiator identity of N-formylmethionyl-tRNA by promoting its recognition by IF2 and preventing the misappropriation of this tRNA by the elongation apparatus. The polypeptide is Methionyl-tRNA formyltransferase (Caldanaerobacter subterraneus subsp. tengcongensis (strain DSM 15242 / JCM 11007 / NBRC 100824 / MB4) (Thermoanaerobacter tengcongensis)).